Reading from the N-terminus, the 667-residue chain is Probable export ATP-binding/permease protein MacB (667 aa).

An ABC transporter domain is found at 22–260 (LRLAGVSRRF…PVEEVQPAAE (239 aa)). Position 58-65 (58-65 (GASGSGKS)) interacts with ATP. The next 4 membrane-spanning stretches (helical) occupy residues 292-312 (LLTM…SAIG), 540-560 (LTLL…IGVM), 601-621 (IGGV…ALFV), and 630-650 (LGSI…FGFV).

This sequence belongs to the ABC transporter superfamily. Macrolide exporter (TC 3.A.1.122) family. Probably part of a tripartite efflux system, which is composed of an inner membrane transporter, a periplasmic membrane fusion protein, and an outer membrane component.

The protein localises to the cell inner membrane. In terms of biological role, probably part of a tripartite efflux system. This Pseudomonas entomophila (strain L48) protein is Probable export ATP-binding/permease protein MacB.